Here is a 288-residue protein sequence, read N- to C-terminus: uncharacterized protein (288 aa).

It to M.bovis Mb1522c, M.leprae ML1804 and M.avium MAV321.

This is an uncharacterized protein from Mycobacterium tuberculosis (strain CDC 1551 / Oshkosh).